The chain runs to 193 residues: GTP cyclohydrolase-2 (193 aa).

45-49 contributes to the GTP binding site; that stretch reads RIHSE. Residues C50, C61, and C63 each contribute to the Zn(2+) site. GTP-binding positions include Q66, 87–89, and T109; that span reads EGR. The active-site Proton acceptor is D121. The active-site Nucleophile is R123. GTP contacts are provided by T144 and K149.

Belongs to the GTP cyclohydrolase II family. Zn(2+) serves as cofactor.

The catalysed reaction is GTP + 4 H2O = 2,5-diamino-6-hydroxy-4-(5-phosphoribosylamino)-pyrimidine + formate + 2 phosphate + 3 H(+). Its pathway is cofactor biosynthesis; riboflavin biosynthesis; 5-amino-6-(D-ribitylamino)uracil from GTP: step 1/4. Catalyzes the conversion of GTP to 2,5-diamino-6-ribosylamino-4(3H)-pyrimidinone 5'-phosphate (DARP), formate and pyrophosphate. This chain is GTP cyclohydrolase-2, found in Campylobacter hominis (strain ATCC BAA-381 / DSM 21671 / CCUG 45161 / LMG 19568 / NCTC 13146 / CH001A).